The following is a 98-amino-acid chain: MPLIYMNITLAFTMSLLGMLVYRSHLMSSLLCLEGMMLSLFIMITLMTLNTHSLLANIMPITMLVFAACEAAVGLALLASISNTYGLDYVNNLNLLQC.

Helical transmembrane passes span 1 to 21 (MPLI…GMLV), 29 to 49 (SLLC…LMTL), and 58 to 78 (IMPI…LALL).

This sequence belongs to the complex I subunit 4L family. As to quaternary structure, core subunit of respiratory chain NADH dehydrogenase (Complex I) which is composed of 45 different subunits.

The protein localises to the mitochondrion inner membrane. The catalysed reaction is a ubiquinone + NADH + 5 H(+)(in) = a ubiquinol + NAD(+) + 4 H(+)(out). Its function is as follows. Core subunit of the mitochondrial membrane respiratory chain NADH dehydrogenase (Complex I) which catalyzes electron transfer from NADH through the respiratory chain, using ubiquinone as an electron acceptor. Part of the enzyme membrane arm which is embedded in the lipid bilayer and involved in proton translocation. This Pongo abelii (Sumatran orangutan) protein is NADH-ubiquinone oxidoreductase chain 4L (MT-ND4L).